A 204-amino-acid polypeptide reads, in one-letter code: Thymidylate kinase (204 aa).

11 to 18 (GLDKSGKT) is an ATP binding site.

This sequence belongs to the thymidylate kinase family.

It carries out the reaction dTMP + ATP = dTDP + ADP. It participates in pyrimidine metabolism; dTTP biosynthesis. The polypeptide is Thymidylate kinase (TMK) (Camelus).